Reading from the N-terminus, the 198-residue chain is Na(+)-translocating NADH-quinone reductase subunit E (198 aa).

6 helical membrane passes run 11–31, 35–55, 77–97, 110–130, 140–160, and 176–196; these read AVFI…FLAV, VSTA…AVPV, FLNF…LEMV, GIFL…SFMV, IVYG…LAGL, and LGIT…FSGI.

The protein belongs to the NqrDE/RnfAE family. Composed of six subunits; NqrA, NqrB, NqrC, NqrD, NqrE and NqrF.

It localises to the cell inner membrane. The enzyme catalyses a ubiquinone + n Na(+)(in) + NADH + H(+) = a ubiquinol + n Na(+)(out) + NAD(+). Its function is as follows. NQR complex catalyzes the reduction of ubiquinone-1 to ubiquinol by two successive reactions, coupled with the transport of Na(+) ions from the cytoplasm to the periplasm. NqrA to NqrE are probably involved in the second step, the conversion of ubisemiquinone to ubiquinol. This is Na(+)-translocating NADH-quinone reductase subunit E from Haemophilus influenzae (strain 86-028NP).